The sequence spans 329 residues: Tyrosine recombinase XerC 1 (329 aa).

Positions 14-101 (APPHPQIGAY…AWRGWYQWLA (88 aa)) constitute a Core-binding (CB) domain. Residues 123–320 (RLPKALSVEQ…DFQHLAKIYD (198 aa)) enclose the Tyr recombinase domain. Catalysis depends on residues Arg-163, Lys-198, His-272, Arg-275, and His-298. Tyr-307 (O-(3'-phospho-DNA)-tyrosine intermediate) is an active-site residue.

Belongs to the 'phage' integrase family. XerC subfamily. In terms of assembly, forms a cyclic heterotetrameric complex composed of two molecules of XerC and two molecules of XerD.

The protein localises to the cytoplasm. Site-specific tyrosine recombinase, which acts by catalyzing the cutting and rejoining of the recombining DNA molecules. The XerC-XerD complex is essential to convert dimers of the bacterial chromosome into monomers to permit their segregation at cell division. It also contributes to the segregational stability of plasmids. The sequence is that of Tyrosine recombinase XerC 1 (xerC1) from Ralstonia nicotianae (strain ATCC BAA-1114 / GMI1000) (Ralstonia solanacearum).